A 556-amino-acid chain; its full sequence is Amidophosphoribosyltransferase (556 aa).

The propeptide occupies 1-57; sequence MCLAVGVGVRAPKHVPQIRRLGRAGRRLRCVTNCALGSCPIVTVQQPGRDFSSPREE. Cysteine 58 functions as the Nucleophile in the catalytic mechanism. The 227-residue stretch at 58 to 284 folds into the Glutamine amidotransferase type-2 domain; it reads CGVFGVWAPG…PGELLAIDAD (227 aa). Residue cysteine 299 coordinates [4Fe-4S] cluster. Residues serine 346, aspartate 408, and aspartate 409 each contribute to the Mg(2+) site. [4Fe-4S] cluster contacts are provided by cysteine 445, cysteine 501, and cysteine 504.

In the C-terminal section; belongs to the purine/pyrimidine phosphoribosyltransferase family. The cofactor is Mg(2+). [4Fe-4S] cluster is required as a cofactor.

The enzyme catalyses 5-phospho-beta-D-ribosylamine + L-glutamate + diphosphate = 5-phospho-alpha-D-ribose 1-diphosphate + L-glutamine + H2O. The protein operates within purine metabolism; IMP biosynthesis via de novo pathway; N(1)-(5-phospho-D-ribosyl)glycinamide from 5-phospho-alpha-D-ribose 1-diphosphate: step 1/2. Catalyzes the formation of phosphoribosylamine from phosphoribosylpyrophosphate (PRPP) and glutamine. In Mycobacterium leprae (strain TN), this protein is Amidophosphoribosyltransferase.